The primary structure comprises 277 residues: 3-methyl-2-oxobutanoate hydroxymethyltransferase (277 aa).

Positions 53 and 96 each coordinate Mg(2+). Residues 53–54 (DS), Asp96, and Lys126 contribute to the 3-methyl-2-oxobutanoate site. Mg(2+) is bound at residue Glu128. The Proton acceptor role is filled by Glu195.

It belongs to the PanB family. As to quaternary structure, homodecamer; pentamer of dimers. The cofactor is Mg(2+).

It localises to the cytoplasm. The enzyme catalyses 3-methyl-2-oxobutanoate + (6R)-5,10-methylene-5,6,7,8-tetrahydrofolate + H2O = 2-dehydropantoate + (6S)-5,6,7,8-tetrahydrofolate. Its pathway is cofactor biosynthesis; (R)-pantothenate biosynthesis; (R)-pantoate from 3-methyl-2-oxobutanoate: step 1/2. Functionally, catalyzes the reversible reaction in which hydroxymethyl group from 5,10-methylenetetrahydrofolate is transferred onto alpha-ketoisovalerate to form ketopantoate. This Prosthecochloris aestuarii (strain DSM 271 / SK 413) protein is 3-methyl-2-oxobutanoate hydroxymethyltransferase.